The primary structure comprises 281 residues: uncharacterized protein (281 aa).

Disordered stretches follow at residues 192–212 (SNSS…IQET) and 227–281 (EDYV…SEEY). The span at 200–211 (MDKKSDDSKIQE) shows a compositional bias: basic and acidic residues. 2 stretches are compositionally biased toward acidic residues: residues 227-240 (EDYV…ISDN) and 249-260 (DTDSDLGDLEDP).

Belongs to the cullin family.

This is an uncharacterized protein from Acanthamoeba polyphaga (Amoeba).